We begin with the raw amino-acid sequence, 101 residues long: DNA-binding protein Fis (101 aa).

A DNA-binding region (H-T-H motif) is located at residues 77 to 96 (QTRAANMLGINRGTLRKKLK).

The protein belongs to the transcriptional regulatory Fis family. As to quaternary structure, homodimer.

Its function is as follows. Activates ribosomal RNA transcription. Plays a direct role in upstream activation of rRNA promoters. This Shewanella denitrificans (strain OS217 / ATCC BAA-1090 / DSM 15013) protein is DNA-binding protein Fis.